Consider the following 507-residue polypeptide: Protoheme IX farnesyltransferase, mitochondrial (507 aa).

The segment covering serine 72–threonine 90 has biased composition (low complexity). The tract at residues serine 72 to alanine 136 is disordered. Basic residues predominate over residues lysine 99–alanine 111. The next 8 membrane-spanning stretches (helical) occupy residues leucine 166–methionine 186, proline 199–leucine 219, alanine 248–valine 268, proline 270–leucine 290, threonine 298–glycine 318, isoleucine 339–leucine 359, phenylalanine 392–alanine 412, and glycine 441–lysine 461.

This sequence belongs to the UbiA prenyltransferase family.

It is found in the mitochondrion membrane. It carries out the reaction heme b + (2E,6E)-farnesyl diphosphate + H2O = Fe(II)-heme o + diphosphate. Functionally, converts protoheme IX and farnesyl diphosphate to heme O. In Gibberella zeae (strain ATCC MYA-4620 / CBS 123657 / FGSC 9075 / NRRL 31084 / PH-1) (Wheat head blight fungus), this protein is Protoheme IX farnesyltransferase, mitochondrial (COX10).